Consider the following 793-residue polypeptide: Probable phosphoketolase 2 (793 aa).

The protein belongs to the XFP family. The cofactor is thiamine diphosphate.

This chain is Probable phosphoketolase 2, found in Nostoc sp. (strain PCC 7120 / SAG 25.82 / UTEX 2576).